Here is a 259-residue protein sequence, read N- to C-terminus: 4-hydroxy-tetrahydrodipicolinate reductase (259 aa).

Residue 9-14 (GANGRM) participates in NAD(+) binding. Arg37 provides a ligand contact to NADP(+). NAD(+) contacts are provided by residues 92-94 (GTT) and 116-119 (ASNM). His149 acts as the Proton donor/acceptor in catalysis. His150 contacts (S)-2,3,4,5-tetrahydrodipicolinate. The active-site Proton donor is the Lys153. 159–160 (GT) lines the (S)-2,3,4,5-tetrahydrodipicolinate pocket.

This sequence belongs to the DapB family.

It localises to the cytoplasm. The catalysed reaction is (S)-2,3,4,5-tetrahydrodipicolinate + NAD(+) + H2O = (2S,4S)-4-hydroxy-2,3,4,5-tetrahydrodipicolinate + NADH + H(+). It catalyses the reaction (S)-2,3,4,5-tetrahydrodipicolinate + NADP(+) + H2O = (2S,4S)-4-hydroxy-2,3,4,5-tetrahydrodipicolinate + NADPH + H(+). Its pathway is amino-acid biosynthesis; L-lysine biosynthesis via DAP pathway; (S)-tetrahydrodipicolinate from L-aspartate: step 4/4. In terms of biological role, catalyzes the conversion of 4-hydroxy-tetrahydrodipicolinate (HTPA) to tetrahydrodipicolinate. The polypeptide is 4-hydroxy-tetrahydrodipicolinate reductase (Desulfovibrio desulfuricans (strain ATCC 27774 / DSM 6949 / MB)).